The sequence spans 354 residues: Uroporphyrinogen decarboxylase (354 aa).

Substrate is bound by residues 27-31 (RQAGR), Asp77, Tyr154, Thr209, and His327.

It belongs to the uroporphyrinogen decarboxylase family. Homodimer.

It is found in the cytoplasm. It carries out the reaction uroporphyrinogen III + 4 H(+) = coproporphyrinogen III + 4 CO2. It functions in the pathway porphyrin-containing compound metabolism; protoporphyrin-IX biosynthesis; coproporphyrinogen-III from 5-aminolevulinate: step 4/4. Its function is as follows. Catalyzes the decarboxylation of four acetate groups of uroporphyrinogen-III to yield coproporphyrinogen-III. This chain is Uroporphyrinogen decarboxylase, found in Escherichia coli O6:K15:H31 (strain 536 / UPEC).